A 95-amino-acid chain; its full sequence is Aspartyl/glutamyl-tRNA(Asn/Gln) amidotransferase subunit C (95 aa).

It belongs to the GatC family. As to quaternary structure, heterotrimer of A, B and C subunits.

The catalysed reaction is L-glutamyl-tRNA(Gln) + L-glutamine + ATP + H2O = L-glutaminyl-tRNA(Gln) + L-glutamate + ADP + phosphate + H(+). It carries out the reaction L-aspartyl-tRNA(Asn) + L-glutamine + ATP + H2O = L-asparaginyl-tRNA(Asn) + L-glutamate + ADP + phosphate + 2 H(+). In terms of biological role, allows the formation of correctly charged Asn-tRNA(Asn) or Gln-tRNA(Gln) through the transamidation of misacylated Asp-tRNA(Asn) or Glu-tRNA(Gln) in organisms which lack either or both of asparaginyl-tRNA or glutaminyl-tRNA synthetases. The reaction takes place in the presence of glutamine and ATP through an activated phospho-Asp-tRNA(Asn) or phospho-Glu-tRNA(Gln). This is Aspartyl/glutamyl-tRNA(Asn/Gln) amidotransferase subunit C from Jannaschia sp. (strain CCS1).